Reading from the N-terminus, the 644-residue chain is Sentrin-specific protease 1 (644 aa).

The tract at residues 1-200 (MDDIADRMRM…REIYRQLLQM (200 aa)) is interaction with CCAR2. Residues serine 57, serine 117, serine 132, and serine 157 each carry the phosphoserine modification. Residues 92-117 (QSANGQWRNSTPSSSSSLQKSRNSRS) form a disordered region. A compositionally biased stretch (low complexity) spans 99 to 117 (RNSTPSSSSSLQKSRNSRS). 2 disordered regions span residues 156–184 (PSPS…TAEE) and 283–312 (SKDS…NTQS). The short motif at 171-177 (PKKTQRR) is the Nuclear localization signal element. Positions 450–613 (LTITRKDIQT…GMFACKYADC (164 aa)) are protease. Catalysis depends on residues histidine 533 and aspartate 550. The Nuclear localization signal signature appears at 574-577 (KKRK). Residue cysteine 603 is the Nucleophile of the active site. The Nuclear localization signal motif lies at 628 to 634 (PYFRKRM). Residues 635-644 (VWEILHRKLL) carry the Nuclear export signal motif.

The protein belongs to the peptidase C48 family. As to quaternary structure, interacts with RBM33; promoting ALKBH5 desumoylation and subsequent activation. In terms of tissue distribution, highly expressed in testis. Expressed at lower levels in thymus, pancreas, spleen, liver, ovary and small intestine.

It is found in the nucleus. The protein resides in the cytoplasm. Its function is as follows. Protease that catalyzes two essential functions in the SUMO pathway. The first is the hydrolysis of an alpha-linked peptide bond at the C-terminal end of the small ubiquitin-like modifier (SUMO) propeptides, SUMO1, SUMO2 and SUMO3 leading to the mature form of the proteins. The second is the deconjugation of SUMO1, SUMO2 and SUMO3 from targeted proteins, by cleaving an epsilon-linked peptide bond between the C-terminal glycine of the mature SUMO and the lysine epsilon-amino group of the target protein. Deconjugates SUMO1 from HIPK2. Deconjugates SUMO1 from HDAC1 and BHLHE40/DEC1, which decreases its transcriptional repression activity. Deconjugates SUMO1 from CLOCK, which decreases its transcriptional activation activity. Deconjugates SUMO2 from MTA1. Inhibits N(6)-methyladenosine (m6A) RNA methylation by mediating SUMO1 deconjugation from METTL3 and ALKBH5: METTL3 inhibits the m6A RNA methyltransferase activity, while ALKBH5 desumoylation promotes m6A demethylation. Desumoylates CCAR2 which decreases its interaction with SIRT1. Deconjugates SUMO1 from GPS2. The sequence is that of Sentrin-specific protease 1 (SENP1) from Homo sapiens (Human).